A 192-amino-acid polypeptide reads, in one-letter code: Ion-translocating oxidoreductase complex subunit A (192 aa).

Transmembrane regions (helical) follow at residues isoleucine 5–leucine 25, valine 39–valine 59, isoleucine 63–valine 83, leucine 102–leucine 122, valine 134–leucine 154, and alanine 171–valine 191.

Belongs to the NqrDE/RnfAE family. The complex is composed of six subunits: RnfA, RnfB, RnfC, RnfD, RnfE and RnfG.

The protein resides in the cell inner membrane. Part of a membrane-bound complex that couples electron transfer with translocation of ions across the membrane. This is Ion-translocating oxidoreductase complex subunit A from Haemophilus influenzae (strain 86-028NP).